Consider the following 457-residue polypeptide: Adenylosuccinate synthetase isozyme 1 (457 aa).

The interval Met-1–Arg-21 is disordered. GTP-binding positions include Gly-42–Lys-48 and Gly-70–Thr-72. Catalysis depends on Asp-43, which acts as the Proton acceptor. Mg(2+) is bound by residues Asp-43 and Gly-70. Asp-43 is a substrate binding site. Residues Asp-43–Lys-46, Asn-68–His-71, Thr-163, Arg-177, Asn-256, Thr-271, and Arg-335 contribute to the IMP site. The Proton donor role is filled by His-71. Position 331 to 337 (Val-331 to Arg-337) interacts with substrate. GTP contacts are provided by residues Arg-337, Lys-363–Asp-365, and Gly-445–Lys-448.

Belongs to the adenylosuccinate synthetase family. Homodimer. It depends on Mg(2+) as a cofactor. Predominantly expressed in skeletal muscle and heart, as well as in several hematopoietic cell lines and solid tumors.

The protein resides in the cytoplasm. The enzyme catalyses IMP + L-aspartate + GTP = N(6)-(1,2-dicarboxyethyl)-AMP + GDP + phosphate + 2 H(+). The protein operates within purine metabolism; AMP biosynthesis via de novo pathway; AMP from IMP: step 1/2. Functionally, component of the purine nucleotide cycle (PNC), which interconverts IMP and AMP to regulate the nucleotide levels in various tissues, and which contributes to glycolysis and ammoniagenesis. Catalyzes the first committed step in the biosynthesis of AMP from IMP. The chain is Adenylosuccinate synthetase isozyme 1 from Homo sapiens (Human).